Reading from the N-terminus, the 504-residue chain is D-alanine--D-alanyl carrier protein ligase (504 aa).

152 to 153 (TS) serves as a coordination point for ATP. Asp197 contacts D-alanine. 292 to 297 (NTYGPT) contributes to the ATP binding site. Val301 serves as a coordination point for D-alanine. Residues Asp383, 394-397 (YNGR), and Lys492 each bind ATP. Lys492 provides a ligand contact to D-alanine.

It belongs to the ATP-dependent AMP-binding enzyme family. DltA subfamily.

The protein localises to the cytoplasm. It carries out the reaction holo-[D-alanyl-carrier protein] + D-alanine + ATP = D-alanyl-[D-alanyl-carrier protein] + AMP + diphosphate. It functions in the pathway cell wall biogenesis; lipoteichoic acid biosynthesis. Its function is as follows. Catalyzes the first step in the D-alanylation of lipoteichoic acid (LTA), the activation of D-alanine and its transfer onto the D-alanyl carrier protein (Dcp) DltC. In an ATP-dependent two-step reaction, forms a high energy D-alanyl-AMP intermediate, followed by transfer of the D-alanyl residue as a thiol ester to the phosphopantheinyl prosthetic group of the Dcp. D-alanylation of LTA plays an important role in modulating the properties of the cell wall in Gram-positive bacteria, influencing the net charge of the cell wall. This is D-alanine--D-alanyl carrier protein ligase from Bacillus cereus (strain ATCC 10987 / NRS 248).